A 325-amino-acid chain; its full sequence is Olfactory receptor 5T18 (325 aa).

At 1 to 22 the chain is on the extracellular side; that stretch reads MRNITEATFFVLKGLTDNNELQ. N-linked (GlcNAc...) asparagine glycosylation occurs at asparagine 3. A run of 2 helical transmembrane segments spans residues 23–43 and 44–64; these read IILF…NVGL and IILV…LSVL. Residues 65 to 97 are Extracellular-facing; sequence SSVDACYSTDITPNMLVGFMSKSKIISFYGCAT. A disulfide bridge connects residues cysteine 95 and cysteine 187. The helical transmembrane segment at 98–118 threads the bilayer; sequence QMFLAVTFGTTECFLLAAMAY. The Cytoplasmic portion of the chain corresponds to 119 to 139; it reads DRYVAIHDPLLYAVSMSPRVY. Residues 140–160 form a helical membrane-spanning segment; that stretch reads IPLIIASYAGGIVHAIIHTVA. Residues 161-194 lie on the Extracellular side of the membrane; sequence TFSLSFCRSNEVKHIFCDIPPLLAISCSETYVNE. Residues 195–215 form a helical membrane-spanning segment; the sequence is LLLFFFVSFIELVTILIVLVS. Residues 216-234 are Cytoplasmic-facing; the sequence is YAFILLSILKMNSSEGRRK. The chain crosses the membrane as a helical span at residues 235–255; it reads VFSTCGAHLTAVSIYYGTILF. Residues 256–269 are Extracellular-facing; it reads MYVRPSSNYSLEHD. The chain crosses the membrane as a helical span at residues 270–290; that stretch reads MIVSTFYTIGIPMLNPIIYSL. Topologically, residues 291–325 are cytoplasmic; that stretch reads RNKDVKEAMKRVLRKKINIKHRIKKLNDFSVFLMP.

It belongs to the G-protein coupled receptor 1 family.

It is found in the cell membrane. Functionally, potential odorant receptor. The polypeptide is Olfactory receptor 5T18 (Mus musculus (Mouse)).